The chain runs to 523 residues: Glycerate kinase (523 aa).

A Phosphoserine modification is found at serine 60. An N6-acetyllysine modification is found at lysine 200.

This sequence belongs to the glycerate kinase type-2 family.

It localises to the cytoplasm. The enzyme catalyses (R)-glycerate + ATP = (2R)-3-phosphoglycerate + ADP + H(+). This chain is Glycerate kinase (Glyctk), found in Rattus norvegicus (Rat).